The following is a 1158-amino-acid chain: Nuclear receptor-interacting protein 1 (1158 aa).

An interaction with ZNF366 region spans residues 1 to 415 (MTHGEELGSD…EESSTPTTID (415 aa)). The LXXLL motif 1 motif lies at 21 to 25 (LEGLL). The tract at residues 33 to 56 (SGTAVDKKSAGHNEEDQNFNISGS) is disordered. Positions 37–47 (VDKKSAGHNEE) are enriched in basic and acidic residues. Positions 78–333 (MLHLKKARLL…HLNGQARTSS (256 aa)) are repression domain 1. Residue serine 104 is modified to Phosphoserine. Lysine 111 is subject to N6-acetyllysine; alternate. A Glycyl lysine isopeptide (Lys-Gly) (interchain with G-Cter in SUMO2); alternate cross-link involves residue lysine 111. Positions 133-137 (LASLL) match the LXXLL motif 2 motif. Lysine 158 carries the N6-acetyllysine modification. A Glycyl lysine isopeptide (Lys-Gly) (interchain with G-Cter in SUMO2) cross-link involves residue lysine 170. The LXXLL motif 3 motif lies at 185 to 189 (LKTLL). Glycyl lysine isopeptide (Lys-Gly) (interchain with G-Cter in SUMO2) cross-links involve residues lysine 195 and lysine 198. At threonine 207 the chain carries Phosphothreonine. The residue at position 218 (serine 218) is a Phosphoserine. The short motif at 266–270 (LALLL) is the LXXLL motif 4 element. 2 positions are modified to N6-acetyllysine: lysine 286 and lysine 310. Residue serine 356 is modified to Phosphoserine. A Glycyl lysine isopeptide (Lys-Gly) (interchain with G-Cter in SUMO2) cross-link involves residue lysine 372. At serine 378 the chain carries Phosphoserine. Residues 380 to 384 (LLHLL) carry the LXXLL motif 5 motif. The interval 393-435 (MNGHSHSERGSIFEESSTPTTIDEYSDNNPSFTDDSSGDESSY) is disordered. Polar residues predominate over residues 406-435 (EESSTPTTIDEYSDNNPSFTDDSSGDESSY). A repression domain 2 region spans residues 410–700 (TPTTIDEYSD…PTGPEPGLSG (291 aa)). The tract at residues 431 to 472 (DESSYSNCVPIDLSCKHRTEKSESDQPVSLDNFTQSLLNTWD) is required for targeting to small nuclear foci. The CTBP-binding; principal site signature appears at 440–446 (PIDLSCK). An N6-acetyllysine mark is found at lysine 446 and lysine 481. Serine 487 bears the Phosphoserine mark. The LXXLL motif 6 motif lies at 500–504 (LLQLL). Lysine 508 participates in a covalent cross-link: Glycyl lysine isopeptide (Lys-Gly) (interchain with G-Cter in SUMO2). Position 518 is a phosphoserine (serine 518). N6-acetyllysine is present on lysine 528. The interval 540–563 (IESPSTNRTTPVSTPPLLTSSKAG) is disordered. Phosphoserine is present on serine 542. Low complexity predominate over residues 548-560 (TTPVSTPPLLTSS). The residue at position 564 (serine 564) is a Phosphoserine. 2 short sequence motifs (CTBP-binding) span residues 565 to 569 (PINLS) and 599 to 603 (SMDLT). 2 disordered regions span residues 592–622 (TNTA…AQNS) and 641–663 (SSMS…DKPI). Basic and acidic residues predominate over residues 601-610 (DLTKSKDPPG). N6-acetyllysine is present on lysine 606. Over residues 641 to 659 (SSMSVEEQRPSKQLLTGNT) the composition is skewed to polar residues. Residue serine 671 is modified to Phosphoserine. Positions 713–717 (LQLLL) match the LXXLL motif 7 motif. Positions 716-745 (LLGNPNKGKSEKKEKTPLRDESTQEHSERA) are disordered. Positions 723–745 (GKSEKKEKTPLRDESTQEHSERA) are enriched in basic and acidic residues. The tract at residues 735–885 (DESTQEHSER…NIVDAANNHS (151 aa)) is repression domain 3. The interval 753-1158 (VKIKSEPCDD…SVLTIKKESE (406 aa)) is interaction with ZNF366. Glycyl lysine isopeptide (Lys-Gly) (interchain with G-Cter in SUMO2) cross-links involve residues lysine 756 and lysine 802. At serine 807 the chain carries Phosphoserine. An LXXLL motif 8 motif is present at residues 819 to 823 (LSRLL). Glycyl lysine isopeptide (Lys-Gly) (interchain with G-Cter in SUMO2) cross-links involve residues lysine 850 and lysine 901. Lysine 931 bears the N6-acetyllysine; alternate mark. Lysine 931 participates in a covalent cross-link: Glycyl lysine isopeptide (Lys-Gly) (interchain with G-Cter in SUMO2); alternate. The short motif at 936 to 940 (LKQLL) is the LXXLL motif 9 element. The CTBP-binding signature appears at 946-950 (VRDLS). Positions 950 to 974 (SPHRSNSVADSKKKGHKNNVTNSKP) are disordered. Residue serine 1001 is modified to Phosphoserine. The short motif at 1061-1074 (LTKTNPILYYMLQK) is the Ligand-dependent nuclear receptor binding element. Residues lysine 1105, lysine 1115, and lysine 1154 each participate in a glycyl lysine isopeptide (Lys-Gly) (interchain with G-Cter in SUMO2) cross-link. A repression domain 4 region spans residues 1118-1158 (FFNLRSPYNSHMGNNASRPHSANGEVYGLLGSVLTIKKESE).

As to quaternary structure, interacts with RARA and RXRB homodimers and RARA/RXRB heterodimers in the presence of ligand. Interacts with HDAC1 and HDAC3 via its N-terminal domain. Interacts with NR2C1 (sumoylated form and via the ligand-binding domain); the interaction results in promoting the repressor activity of NR2C1. Interacts with CTBP1, CTBP2, ESR1, HDAC1, HDAC2, HDAC5, HDAC6, NR2C2, NR3C1, NR3C2, YWHAH, JUN and FOS. Found in a complex with both NR3C1 and YWHAH. Interacts with ZNF366. Interacts with RORA. Post-translationally, acetylation regulates its nuclear translocation and corepressive activity. Acetylation abolishes interaction with CTBP1. Phosphorylation enhances interaction with YWHAH.

It is found in the nucleus. Modulates transcriptional activation by steroid receptors such as NR3C1, NR3C2 and ESR1. Also modulates transcriptional repression by nuclear hormone receptors. Positive regulator of the circadian clock gene expression: stimulates transcription of BMAL1, CLOCK and CRY1 by acting as a coactivator for RORA and RORC. Involved in the regulation of ovarian function. Plays a role in renal development. This chain is Nuclear receptor-interacting protein 1 (NRIP1), found in Homo sapiens (Human).